A 342-amino-acid chain; its full sequence is Polygalacturonase inhibitor 1 (342 aa).

An N-terminal signal peptide occupies residues 1-29 (MTQFNIPVTMSSSLSIILVILVSLRTALS). 2 disulfides stabilise this stretch: cysteine 32–cysteine 62 and cysteine 63–cysteine 72. Asparagine 64 carries N-linked (GlcNAc...) asparagine glycosylation. LRR repeat units lie at residues 82-107 (NNLDLSGHNLPKPYPIPSSLANLPYL), 108-132 (NFLYIGGINNLVGPIPPAIAKLTQL), 133-156 (HYLYITHTNVSGAIPDFLSQIKTL), 157-180 (VTLDFSYNALSGTLPPSISSLPNL), 181-205 (GGITFDGNRISGAIPDSYGSFSKLF), 206-228 (TAMTISRNRLTGKIPPTFANLNL), 229-252 (AFVDLSRNMLEGDASVLFGSDKNT), 253-275 (KKIHLAKNSLAFDLGKVGLSKNL), 276-299 (NGLDLRNNRIYGTLPQGLTQLKFL), and 300-319 (QSLNVSFNNLCGEIPQGGNL). Asparagine 141 carries N-linked (GlcNAc...) asparagine glycosylation. The N-linked (GlcNAc...) asparagine glycan is linked to asparagine 303. 2 disulfide bridges follow: cysteine 310–cysteine 332 and cysteine 334–cysteine 341.

The protein belongs to the polygalacturonase-inhibiting protein family.

It localises to the secreted. It is found in the cell wall. The protein localises to the membrane. In terms of biological role, inhibitor of fungal polygalacturonase. It is an important factor for plant resistance to phytopathogenic fungi. Substrate preference is polygalacturonase (PG) from A.niger &gt;&gt; PG of F.oxysporum, A.solani or B.cinerea. Not active on PG from F.moniliforme. The polypeptide is Polygalacturonase inhibitor 1 (PGIP1) (Phaseolus vulgaris (Kidney bean)).